The following is a 504-amino-acid chain: Glycerol kinase (504 aa).

Thr-14 contributes to the ADP binding site. Residues Thr-14, Thr-15, and Ser-16 each contribute to the ATP site. A sn-glycerol 3-phosphate-binding site is contributed by Thr-14. Position 18 (Arg-18) interacts with ADP. Sn-glycerol 3-phosphate-binding residues include Arg-84, Glu-85, Tyr-136, and Asp-246. 5 residues coordinate glycerol: Arg-84, Glu-85, Tyr-136, Asp-246, and Gln-247. 2 residues coordinate ADP: Thr-268 and Gly-311. Positions 268, 311, 315, and 412 each coordinate ATP. Positions 412 and 416 each coordinate ADP.

Belongs to the FGGY kinase family.

The catalysed reaction is glycerol + ATP = sn-glycerol 3-phosphate + ADP + H(+). It functions in the pathway polyol metabolism; glycerol degradation via glycerol kinase pathway; sn-glycerol 3-phosphate from glycerol: step 1/1. With respect to regulation, inhibited by fructose 1,6-bisphosphate (FBP). Its function is as follows. Key enzyme in the regulation of glycerol uptake and metabolism. Catalyzes the phosphorylation of glycerol to yield sn-glycerol 3-phosphate. The polypeptide is Glycerol kinase (Aliivibrio fischeri (strain MJ11) (Vibrio fischeri)).